A 641-amino-acid chain; its full sequence is Transcription termination factor MTERF2, chloroplastic (641 aa).

2 disordered regions span residues 54-80 and 606-641; these read LKLN…DLDG and FEAG…DLTE. The span at 610 to 641 shows a compositional bias: acidic residues; it reads LDSEDSQPSDENISDQEIAFSDEAEEEEDLTE.

It belongs to the mTERF family.

Its subcellular location is the plastid. The protein resides in the chloroplast. Its function is as follows. Transcription termination factor involved in processing of plastid transcripts. Essential for embryogenesis. This is Transcription termination factor MTERF2, chloroplastic from Arabidopsis thaliana (Mouse-ear cress).